The primary structure comprises 178 residues: Cyclin-dependent kinase inhibitor 1B (178 aa).

Residues 1-11 show a composition bias toward polar residues; the sequence is MSNVRVSNGSP. Residues 1–31 are disordered; sequence MSNVRVSNGSPSLERMDARQAEYPKPSACRN. A Phosphoserine; by UHMK1 modification is found at S10. The interval 51 to 91 is interaction with CDK2; the sequence is DMEEASQRKWNFDFQNHKPLEGKYEWQEVEKGSLPEFYYRP. Y74 is modified (phosphotyrosine; by SRC). Positions 87–178 are disordered; that stretch reads FYYRPPRPPK…RTEENVSDGS (92 aa). Residue Y88 is modified to Phosphotyrosine; by ABL, LYN, SRC and JAK2. A Phosphotyrosine modification is found at Y89. Positions 104–113 are enriched in polar residues; the sequence is QESQDVSGTR. Over residues 126–137 the composition is skewed to basic and acidic residues; that stretch reads EDTHLVDQKTDT. The short motif at 153 to 169 is the Nuclear localization signal element; that stretch reads KRPATDDSSPQNKRANR. A Phosphothreonine; by CaMK1, PKB/AKT1, RPS6KA1, RPS6KA3 and PIM1 modification is found at T157. The residue at position 170 (T170) is a Phosphothreonine.

It belongs to the CDI family. Forms a ternary complex composed of CCNE1, CDK2 and CDKN1B. Interacts directly with CCNE1; the interaction is inhibited by CDK2-dependent phosphorylation. Interacts with COPS5, subunit of the COP9 signalosome complex; the interaction leads to CDKN1B degradation. Interacts with NUP50; the interaction leads to nuclear import and degradation of phosphorylated CDKN1B. Interacts with CCND1 and SNX6. Interacts (Thr-198-phosphorylated form) with 14-3-3 proteins, binds strongly YWHAQ, weakly YWHAE and YWHAH, but not YWHAB nor YWHAZ; the interaction with YWHAQ results in translocation to the cytoplasm. Interacts with AKT1 and LYN; the interactions lead to cytoplasmic mislocation, phosphorylation of CDKN1B and inhibition of cell cycle arrest. Forms a ternary complex with CCNA2 and CDK2; CDKN1B inhibits the kinase activity of CDK2 through conformational rearrangements. Interacts (unphosphorylated form) with CDK2. Forms a complex with CDK2 and SPDYA, but does not directly interact with SPDYA. Forms a ternary complex composed of cyclin D, CDK4 and CDKN1B. Interacts (phosphorylated on Tyr-88 and Tyr-89) with CDK4; the interaction is required for cyclin D and CDK4 complex assembly, induces nuclear translocation and activates the CDK4 kinase activity. Interacts with GRB2. Interacts with PIM1. Identified in a complex with SKP1, SKP2 and CKS1B. Interacts with UHMK1; the interaction leads to cytoplasmic mislocation, phosphorylation of CDKN1B and inhibition of cell cycle arrest. Also interacts with CDK1. Dephosphorylated by PPM1H, leading to CDKN1B stability. Phosphorylated; phosphorylation occurs on serine, threonine and tyrosine residues. Phosphorylation on Ser-10 is the major site of phosphorylation in resting cells, takes place at the G(0)-G(1) phase and leads to protein stability. Phosphorylation on other sites is greatly enhanced by mitogens, growth factors, MYC and in certain cancer cell lines. The phosphorylated form found in the cytoplasm is inactivate. Phosphorylation on Tyr-88 has no effect on binding CDK complexes. In terms of processing, ubiquitinated; in the cytoplasm by the KPC complex (composed of RNF123/KPC1 and UBAC1/KPC2) and, in the nucleus, by SCF(SKP2). The latter requires prior phosphorylation on Thr-187. Ubiquitinated; by a TRIM21-containing SCF(SKP2)-like complex; leads to its degradation. Post-translationally, subject to degradation in the lysosome. Interaction with SNX6 promotes lysosomal degradation.

The protein resides in the nucleus. It is found in the cytoplasm. Its subcellular location is the endosome. Its function is as follows. Important regulator of cell cycle progression. Inhibits the kinase activity of CDK2 bound to cyclin A, but has little inhibitory activity on CDK2 bound to SPDYA. Involved in G1 arrest. Potent inhibitor of cyclin E- and cyclin A-CDK2 complexes. Forms a complex with cyclin type D-CDK4 complexes and is involved in the assembly, stability, and modulation of CCND1-CDK4 complex activation. Acts either as an inhibitor or an activator of cyclin type D-CDK4 complexes depending on its phosphorylation state and/or stoichometry. This is Cyclin-dependent kinase inhibitor 1B (CDKN1B) from Neovison vison (American mink).